A 259-amino-acid chain; its full sequence is Dihydroorotate dehydrogenase B (NAD(+)), electron transfer subunit (259 aa).

The 101-residue stretch at 2–102 folds into the FAD-binding FR-type domain; it reads MQKQNMIVVN…LGPLGHGFPV (101 aa). FAD contacts are provided by residues 53–56, 70–72, and 77–78; these read RPIS, LYR, and GT. The [2Fe-2S] cluster site is built by cysteine 221, cysteine 226, cysteine 229, and cysteine 246.

It belongs to the PyrK family. In terms of assembly, heterotetramer of 2 PyrK and 2 PyrD type B subunits. The cofactor is [2Fe-2S] cluster. Requires FAD as cofactor.

The protein operates within pyrimidine metabolism; UMP biosynthesis via de novo pathway; orotate from (S)-dihydroorotate (NAD(+) route): step 1/1. Responsible for channeling the electrons from the oxidation of dihydroorotate from the FMN redox center in the PyrD type B subunit to the ultimate electron acceptor NAD(+). This chain is Dihydroorotate dehydrogenase B (NAD(+)), electron transfer subunit, found in Bacillus cereus (strain Q1).